Here is a 255-residue protein sequence, read N- to C-terminus: Thiazole synthase (255 aa).

The active-site Schiff-base intermediate with DXP is the Lys-96. Residues Gly-157, 183-184 (AG), and 205-206 (NT) each bind 1-deoxy-D-xylulose 5-phosphate.

The protein belongs to the ThiG family. Homotetramer. Forms heterodimers with either ThiH or ThiS.

The protein localises to the cytoplasm. The catalysed reaction is [ThiS sulfur-carrier protein]-C-terminal-Gly-aminoethanethioate + 2-iminoacetate + 1-deoxy-D-xylulose 5-phosphate = [ThiS sulfur-carrier protein]-C-terminal Gly-Gly + 2-[(2R,5Z)-2-carboxy-4-methylthiazol-5(2H)-ylidene]ethyl phosphate + 2 H2O + H(+). The protein operates within cofactor biosynthesis; thiamine diphosphate biosynthesis. Its function is as follows. Catalyzes the rearrangement of 1-deoxy-D-xylulose 5-phosphate (DXP) to produce the thiazole phosphate moiety of thiamine. Sulfur is provided by the thiocarboxylate moiety of the carrier protein ThiS. In vitro, sulfur can be provided by H(2)S. This Anoxybacillus flavithermus (strain DSM 21510 / WK1) protein is Thiazole synthase.